The primary structure comprises 401 residues: Dual-specificity RNA methyltransferase RlmN (401 aa).

Glu-114 serves as the catalytic Proton acceptor. In terms of domain architecture, Radical SAM core spans 120 to 365 (DKGRGTLCVS…TMVRRTRGDD (246 aa)). Cys-127 and Cys-370 are oxidised to a cystine. Residues Cys-134, Cys-138, and Cys-141 each coordinate [4Fe-4S] cluster. S-adenosyl-L-methionine-binding positions include 187-188 (GE), Ser-219, 241-243 (SLH), and Asn-327. Cys-370 serves as the catalytic S-methylcysteine intermediate.

It belongs to the radical SAM superfamily. RlmN family. It depends on [4Fe-4S] cluster as a cofactor.

It is found in the cytoplasm. The catalysed reaction is adenosine(2503) in 23S rRNA + 2 reduced [2Fe-2S]-[ferredoxin] + 2 S-adenosyl-L-methionine = 2-methyladenosine(2503) in 23S rRNA + 5'-deoxyadenosine + L-methionine + 2 oxidized [2Fe-2S]-[ferredoxin] + S-adenosyl-L-homocysteine. The enzyme catalyses adenosine(37) in tRNA + 2 reduced [2Fe-2S]-[ferredoxin] + 2 S-adenosyl-L-methionine = 2-methyladenosine(37) in tRNA + 5'-deoxyadenosine + L-methionine + 2 oxidized [2Fe-2S]-[ferredoxin] + S-adenosyl-L-homocysteine. Its function is as follows. Specifically methylates position 2 of adenine 2503 in 23S rRNA and position 2 of adenine 37 in tRNAs. m2A2503 modification seems to play a crucial role in the proofreading step occurring at the peptidyl transferase center and thus would serve to optimize ribosomal fidelity. This Xanthomonas campestris pv. campestris (strain 8004) protein is Dual-specificity RNA methyltransferase RlmN.